The sequence spans 160 residues: Large ribosomal subunit protein uL22c (160 aa).

The protein belongs to the universal ribosomal protein uL22 family. In terms of assembly, part of the 50S ribosomal subunit.

The protein localises to the plastid. Its subcellular location is the chloroplast. This protein binds specifically to 23S rRNA. Functionally, the globular domain of the protein is located near the polypeptide exit tunnel on the outside of the subunit, while an extended beta-hairpin is found that lines the wall of the exit tunnel in the center of the 70S ribosome. The protein is Large ribosomal subunit protein uL22c (rpl22) of Aethionema cordifolium (Lebanon stonecress).